The chain runs to 202 residues: Tetranectin (202 aa).

Positions 1–21 (MELWGPCVLLCLFSLLTQVTA) are cleaved as a signal peptide. 3 disulfide bridges follow: cysteine 71–cysteine 81, cysteine 98–cysteine 197, and cysteine 173–cysteine 189. Positions 77 to 198 (VHMKCFLAFV…CRDKLPYVCQ (122 aa)) constitute a C-type lectin domain.

As to quaternary structure, homotrimer.

It is found in the secreted. Its function is as follows. Tetranectin binds to plasminogen and to isolated kringle 4. May be involved in the packaging of molecules destined for exocytosis. Plays a role in retinal function. The polypeptide is Tetranectin (CLEC3B) (Bos taurus (Bovine)).